A 709-amino-acid polypeptide reads, in one-letter code: Ral guanine nucleotide dissociation stimulator-like 3 (709 aa).

Residues 26–55 form a disordered region; the sequence is VYSVSLRRQRSQRSTPERSGEGQTPIPATD. An N-terminal Ras-GEF domain is found at 64-201; sequence KVRALRAARL…LLEDFLKEAK (138 aa). 3 disordered regions span residues 203-225, 395-416, and 502-604; these read EQTEEEKRLAWSGPPRIAQTPGS, SQEETTEDDDCPSGSLPSKLPP, and PPAA…SRVP. The Ras-GEF domain occupies 248–503; that stretch reads SVDDVAEQLT…YRVSRVIEPP (256 aa). 2 stretches are compositionally biased toward low complexity: residues 502–511 and 533–551; these read PPAASCPSSP and SSPGGSPGDPSSPTSSVSP. 2 positions are modified to phosphoserine: Ser506 and Ser510. Pro residues predominate over residues 552–576; that stretch reads GSPPSSPRNREPPPPGSPPASPGPQ. Residues Ser553, Ser568, Ser572, Ser577, and Ser600 each carry the phosphoserine modification. The tract at residues 611–706 is interaction with HRAS, MRAS and RIT1; that stretch reads SEARVIRVSI…KEGTGHTLSA (96 aa). The 88-residue stretch at 612–699 folds into the Ras-associating domain; the sequence is EARVIRVSIN…GDFLLRRKEG (88 aa).

As to quaternary structure, interacts with GTP-bound forms of RIT1, HRAS and MRAS. As to expression, widely expressed. Expressed at high levels in the liver and kidney.

Functionally, guanine nucleotide exchange factor (GEF) for Ral-A. Potential effector of GTPase HRas and Ras-related protein M-Ras. Negatively regulates Elk-1-dependent gene induction downstream of HRas and MEKK1. This chain is Ral guanine nucleotide dissociation stimulator-like 3 (Rgl3), found in Mus musculus (Mouse).